A 405-amino-acid polypeptide reads, in one-letter code: Argininosuccinate synthase (405 aa).

ATP is bound by residues 10-18 (AYSGGLDTS) and Ala-37. Positions 88 and 93 each coordinate L-citrulline. Residue Gly-118 coordinates ATP. L-aspartate-binding residues include Thr-120, Asn-124, and Asp-125. Position 124 (Asn-124) interacts with L-citrulline. L-citrulline is bound by residues Arg-128, Ser-179, Ser-188, Glu-264, and Tyr-276.

The protein belongs to the argininosuccinate synthase family. Type 1 subfamily. As to quaternary structure, homotetramer.

It is found in the cytoplasm. The catalysed reaction is L-citrulline + L-aspartate + ATP = 2-(N(omega)-L-arginino)succinate + AMP + diphosphate + H(+). It participates in amino-acid biosynthesis; L-arginine biosynthesis; L-arginine from L-ornithine and carbamoyl phosphate: step 2/3. The chain is Argininosuccinate synthase from Pseudomonas entomophila (strain L48).